We begin with the raw amino-acid sequence, 41 residues long: Large ribosomal subunit protein bL36 (41 aa).

This sequence belongs to the bacterial ribosomal protein bL36 family.

This Rhodopseudomonas palustris (strain HaA2) protein is Large ribosomal subunit protein bL36.